The sequence spans 340 residues: 4-hydroxy-2-oxovalerate aldolase (340 aa).

In terms of domain architecture, Pyruvate carboxyltransferase spans 4-255; it reads VVIHDPTLRD…ATGIDLYALL (252 aa). Position 12 to 13 (12 to 13) interacts with substrate; the sequence is RD. Position 13 (aspartate 13) interacts with Mn(2+). Residue histidine 16 is the Proton acceptor of the active site. Serine 166 and histidine 194 together coordinate substrate. Residues histidine 194 and histidine 196 each coordinate Mn(2+).

The protein belongs to the 4-hydroxy-2-oxovalerate aldolase family.

It catalyses the reaction (S)-4-hydroxy-2-oxopentanoate = acetaldehyde + pyruvate. This is 4-hydroxy-2-oxovalerate aldolase from Streptomyces griseus subsp. griseus (strain JCM 4626 / CBS 651.72 / NBRC 13350 / KCC S-0626 / ISP 5235).